Here is a 726-residue protein sequence, read N- to C-terminus: Germacradienol/geosmin synthase (726 aa).

A germacradienol/germacrene D synthase region spans residues 2–354 (TQQPFQLPHF…TSAADVGALL (353 aa)). Mg(2+)-binding residues include aspartate 86, glutamate 91, asparagine 267, threonine 271, glutamine 276, aspartate 455, asparagine 598, serine 602, and glutamate 606. The DDXXD motif 1; degenerate signature appears at 86 to 91 (DDHFLE). The tract at residues 355 to 726 (ADAVAQRARS…VPRSSPALTH (372 aa)) is geosmin synthase. A DDXXD motif 2; degenerate motif is present at residues 455–459 (DDYYP).

It belongs to the terpene synthase family. Mg(2+) is required as a cofactor.

The catalysed reaction is (2E,6E)-farnesyl diphosphate + H2O = (1E,4S,5E,7R)-germacra-1(10),5-dien-11-ol + diphosphate. The enzyme catalyses (1E,4S,5E,7R)-germacra-1(10),5-dien-11-ol + H2O = (-)-geosmin + acetone. It catalyses the reaction (2E,6E)-farnesyl diphosphate = (-)-germacrene D + diphosphate. It participates in secondary metabolite biosynthesis; geosmin biosynthesis. Its pathway is sesquiterpene biosynthesis; germacradienol biosynthesis; germacradienol from farnesyl diphosphate: step 1/1. It functions in the pathway sesquiterpene biosynthesis; germacrene D biosynthesis; germacrene D from farnesyl diphosphate: step 1/1. In terms of biological role, tow-domain protein where the N-terminal domain catalyzes the cyclization of farnesyl diphosphate (FPP) to a 85:15 mixture of the sesquiterpene alcohol germacradienol and the sesquiterpene hydrocarbon germacrene D. The C-terminal domain partially converts the germacradienol formed into geosmin, the characteristic odoriferous ('earthy aroma') constituent of Streptomyces species. This Streptomyces coelicolor (strain ATCC BAA-471 / A3(2) / M145) protein is Germacradienol/geosmin synthase (cyc2).